The following is a 1097-amino-acid chain: U3 small nucleolar RNA-associated protein 22 (1097 aa).

2 stretches are compositionally biased toward basic and acidic residues: residues Met1–Ser10 and Lys18–His27. Residues Met1–His27 are disordered.

This sequence belongs to the NRAP family. As to quaternary structure, component of the ribosomal small subunit (SSU) processome.

The protein localises to the nucleus. Its subcellular location is the nucleolus. Involved in nucleolar processing of pre-18S ribosomal RNA and ribosome assembly. The sequence is that of U3 small nucleolar RNA-associated protein 22 from Schizosaccharomyces pombe (strain 972 / ATCC 24843) (Fission yeast).